Consider the following 403-residue polypeptide: Acetyl-CoA acetyltransferase 2 (403 aa).

Catalysis depends on C97, which acts as the Acyl-thioester intermediate. K237 is a binding site for CoA. A K(+)-binding site is contributed by A254. S258 provides a ligand contact to CoA. Residue V355 coordinates K(+). Active-site proton acceptor residues include H359 and C389.

The protein belongs to the thiolase-like superfamily. Thiolase family. As to expression, expressed in root tips, emerging leaves, young leaves, stems, and anthers at the microspore stage.

The protein localises to the cytoplasm. The protein resides in the peroxisome. The catalysed reaction is 2 acetyl-CoA = acetoacetyl-CoA + CoA. It functions in the pathway metabolic intermediate biosynthesis; (R)-mevalonate biosynthesis; (R)-mevalonate from acetyl-CoA: step 1/3. Its function is as follows. Catalyzes the condensation of two molecules of acetyl-CoA to produce acetoacetyl-CoA. Generates the bulk of the acetoacetyl-CoA precursor required for the cytosol-localized, mevalonate-derived isoprenoid biosynthesis. The generated isoprenoids are required for normal growth and development. Essential protein during embryogenesis. The protein is Acetyl-CoA acetyltransferase 2 of Arabidopsis thaliana (Mouse-ear cress).